The primary structure comprises 346 residues: Anthranilate phosphoribosyltransferase (346 aa).

5-phospho-alpha-D-ribose 1-diphosphate contacts are provided by residues Gly80, 83-84 (GD), Thr88, 90-93 (NIST), 108-116 (KHGNTAVSS), and Ser120. Gly80 is an anthranilate binding site. Ser92 is a Mg(2+) binding site. Asn111 contacts anthranilate. Arg166 serves as a coordination point for anthranilate. Asp225 and Glu226 together coordinate Mg(2+).

Belongs to the anthranilate phosphoribosyltransferase family. As to quaternary structure, homodimer. Mg(2+) is required as a cofactor.

The catalysed reaction is N-(5-phospho-beta-D-ribosyl)anthranilate + diphosphate = 5-phospho-alpha-D-ribose 1-diphosphate + anthranilate. Its pathway is amino-acid biosynthesis; L-tryptophan biosynthesis; L-tryptophan from chorismate: step 2/5. In terms of biological role, catalyzes the transfer of the phosphoribosyl group of 5-phosphorylribose-1-pyrophosphate (PRPP) to anthranilate to yield N-(5'-phosphoribosyl)-anthranilate (PRA). This Desulforudis audaxviator (strain MP104C) protein is Anthranilate phosphoribosyltransferase.